A 780-amino-acid polypeptide reads, in one-letter code: Chromatin structure-remodeling complex subunit rsc9 (780 aa).

In terms of domain architecture, ARID spans 20-112 (TNENDSFLSL…YLISWEIHDH (93 aa)). Position 230 is a phosphothreonine (threonine 230). A DNA-binding region (RFX-type winged-helix) is located at residues 530–609 (SVKWMRCCFE…YVINGIKRRK (80 aa)). Serine 696 bears the Phosphoserine mark.

This sequence belongs to the RSC9 family. In terms of assembly, component of the RSC complex composed of at least arp9, arp42, rsc1, rsc4, rsc7, rsc9, rsc58, sfh1, snf21, ssr1, ssr2, ssr3 and ssr4. The complex interacts with histone and histone variant components of centromeric chromatin.

The protein resides in the cytoplasm. It localises to the nucleus. Functionally, component of the chromatin structure remodeling complex (RSC), which is involved in transcription regulation and nucleosome positioning. Controls particularly membrane and organelle development genes. This is Chromatin structure-remodeling complex subunit rsc9 (rsc9) from Schizosaccharomyces pombe (strain 972 / ATCC 24843) (Fission yeast).